The chain runs to 171 residues: Large ribosomal subunit protein bL9 (171 aa).

The protein belongs to the bacterial ribosomal protein bL9 family.

Functionally, binds to the 23S rRNA. The chain is Large ribosomal subunit protein bL9 from Rickettsia felis (strain ATCC VR-1525 / URRWXCal2) (Rickettsia azadi).